The sequence spans 112 residues: Large ribosomal subunit protein eL30 (112 aa).

The protein belongs to the eukaryotic ribosomal protein eL30 family. As to expression, expressed in roots and leaves.

This is Large ribosomal subunit protein eL30 from Triticum aestivum (Wheat).